Here is a 353-residue protein sequence, read N- to C-terminus: Variable large protein 17 (353 aa).

The first 18 residues, 1–18 (MRKRISAIIMTLFMVLVS), serve as a signal peptide directing secretion. C19 is lipidated: N-palmitoyl cysteine. A lipid anchor (S-diacylglycerol cysteine) is attached at C19. Positions 332–353 (EDKSVEATNTAEATTSGQQAKN) are disordered. The segment covering 337 to 353 (EATNTAEATTSGQQAKN) has biased composition (polar residues).

Belongs to the variable large protein (Vlp) family. Delta subfamily.

It is found in the cell outer membrane. Functionally, the Vlp and Vsp proteins are antigenically distinct proteins, only one vlp or vsp gene is transcriptionally active at any one time. Switching between these genes is a mechanism of host immune response evasion. The protein is Variable large protein 17 of Borrelia hermsii.